The following is a 63-amino-acid chain: Progonadoliberin-1 (63 aa).

Pyrrolidone carboxylic acid is present on glutamine 1. Residue glycine 10 is modified to Glycine amide.

It belongs to the GnRH family. Post-translationally, the precursor is cleaved by ACE, which removes the Gly-Lys-Arg peptide at the C-terminus, leading to mature hormone. The mature form of Gonadoliberin-1 is also cleaved and degraded by ACE.

The protein resides in the secreted. In terms of biological role, stimulates the secretion of gonadotropins; it stimulates the secretion of both luteinizing and follicle-stimulating hormones. In Mesocricetus auratus (Golden hamster), this protein is Progonadoliberin-1 (GNRH1).